Here is a 136-residue protein sequence, read N- to C-terminus: MSLIVYFSSRSENTHRFVQRLGLPAVRIPLNEREHLRVDEPYILIVPSYGGGGTAGAVPRQAIRFLNDVHNRQLIRGVIAAGNRNFGDGWGRAGDVIAQKCAVPYLYRFELMGTPDDINTVRKGVSEFWQRQPQNV.

Belongs to the NrdI family.

Probably involved in ribonucleotide reductase function. This Klebsiella pneumoniae subsp. pneumoniae (strain ATCC 700721 / MGH 78578) protein is Protein NrdI.